The sequence spans 470 residues: Cannabinoid receptor type 1B (470 aa).

Residues 1–113 (MKLALHRIAG…CFMILTPAQQ (113 aa)) are Extracellular-facing. 2 N-linked (GlcNAc...) asparagine glycosylation sites follow: Asn78 and Asn86. Residues 114 to 139 (LVIVILAITLGTFTVLENFVVLCVIL) form a helical membrane-spanning segment. Over 140–151 (HSHTLRSRPSYH) the chain is Cytoplasmic. The helical transmembrane segment at 152–172 (FIGSLAVADLIGSIIFVYSFL) threads the bilayer. The Extracellular segment spans residues 173-184 (DFHVLHRKDSPS). A helical transmembrane segment spans residues 185–209 (IFLFKLAGVIASFTASVGSLFLTAI). Residues 210 to 229 (DRYVSIHRPMAYKRIITKTK) are Cytoplasmic-facing. A helical membrane pass occupies residues 230-252 (AVIAFSVMWAISIEFSLLPLLGW). Residues 253–270 (NCKRLHSVCSDIFPLIDE) are Extracellular-facing. A helical membrane pass occupies residues 271-296 (KYLMFWIGMTTVLLLFIIYAYMFILW). The Cytoplasmic portion of the chain corresponds to 297–341 (KSHHHAVRMLSRSSQRSIIVYTSEGTKVQTVRPEQARMDLRLAKT). The chain crosses the membrane as a helical span at residues 342–362 (LVLILVALIICWGPLLAIMVY). At 363–374 (DLFGRVNDFIKT) the chain is on the extracellular side. Residues 375 to 396 (VFAFCSMLCLLNSTINPVIYAM) form a helical membrane-spanning segment. Residues 397 to 470 (RSKDLRRAFV…VTASSPAEAV (74 aa)) lie on the Cytoplasmic side of the membrane. The S-palmitoyl cysteine moiety is linked to residue Cys412. Residues 418 to 434 (SLDSSAESDWNSRSVRS) are compositionally biased toward polar residues. The segment at 418–450 (SLDSSAESDWNSRSVRSTGGRAGKDRSVGGKPQ) is disordered.

The protein belongs to the G-protein coupled receptor 1 family. Palmitoylation at Cys-412 is important for recruitment at both plasma membrane and lipid rafts and association with G protein alpha subunits.

It localises to the cell membrane. Its subcellular location is the mitochondrion outer membrane. It is found in the cell projection. The protein localises to the axon. The protein resides in the presynapse. In terms of biological role, G-protein coupled receptor for cannabinoids. Mediates many cannabinoid-induced effects in the central nervous system (CNS), as well as in peripheral tissues. Regulates cellular respiration and energy production in response to cannabinoids. Signaling typically involves reduction in cyclic AMP. The protein is Cannabinoid receptor type 1B (cnr1b) of Takifugu rubripes (Japanese pufferfish).